The following is a 771-amino-acid chain: GPI mannosyltransferase 3 (771 aa).

The tract at residues 1–47 (MSSSRRRKSFTSSSSSSSPSFHSPPPTSRLRPRSPPSSNTKTSPTST) is disordered. Composition is skewed to low complexity over residues 10-21 (FTSSSSSSSPSF) and 36-47 (PSSNTKTSPTST). Transmembrane regions (helical) follow at residues 49–69 (PLAT…AFTV), 251–271 (LSLA…WMGL), 285–305 (AILV…SCVV), 341–361 (YVSQ…LVGL), 378–398 (SLVQ…LSLV), 410–430 (LPSL…PAVI), and 441–461 (LTLI…TIYH). The disordered stretch occupies residues 575-594 (SYLSAQPRPQHPSTTSTNDA).

It belongs to the glycosyltransferase 22 family. PIGB subfamily.

It is found in the endoplasmic reticulum membrane. It functions in the pathway glycolipid biosynthesis; glycosylphosphatidylinositol-anchor biosynthesis. Mannosyltransferase involved in glycosylphosphatidylinositol-anchor biosynthesis. Transfers the third mannose to Man2-GlcN-acyl-PI during GPI precursor assembly. The protein is GPI mannosyltransferase 3 (gpi10) of Aspergillus fumigatus (strain ATCC MYA-4609 / CBS 101355 / FGSC A1100 / Af293) (Neosartorya fumigata).